Consider the following 384-residue polypeptide: Secreted LysM effector LysM14 (384 aa).

A signal peptide spans 1-35 (MGWSPRWKVMLRGIFNAMISIHILLSLLFAHIATA). The LysM domain maps to 64–112 (YTYTIQEGDTCAKLAQRYQVTTSNIETWNVGSWGWPGCAKIKQGDFVCL). Residues 185–220 (STTKSAASKTTTTSNPTTTSKTTITSKPTTTSKPTT) are disordered.

Belongs to the secreted LysM effector family.

The protein localises to the secreted. Its function is as follows. Secreted LysM effector that might have a role in sequestration of chitin oligosaccharides (breakdown products of fungal cell walls that are released during invasion and act as triggers of host immunity) to dampen host defense. The chain is Secreted LysM effector LysM14 from Penicillium expansum (Blue mold rot fungus).